We begin with the raw amino-acid sequence, 1163 residues long: Actin cross-linking toxin VgrG1 (1163 aa).

The ACD domain occupies Thr728 to Ala1163. Ser739–Glu743 is an ATP binding site. Mg(2+) is bound by residues Glu743 and Glu805. Residue Ser808 coordinates ATP. Gln889 provides a ligand contact to Mg(2+). Arg995 serves as a coordination point for ATP. Glu1066 lines the Mg(2+) pocket.

This sequence belongs to the VgrG protein family. Interacts with protein VC1417. Mg(2+) is required as a cofactor.

The protein resides in the secreted. It is found in the host cytoplasm. Its subcellular location is the host cytosol. Its function is as follows. Part of the type VI secretion system (T6SS) specialized secretion system, which delivers several virulence factors in both prokaryotic and eukaryotic cells during infection. Forms the spike at the tip of the elongating tube probably formed by hemolysin co-regulated protein/Hcp. Allows the delivery of the TseL antibacterial toxin to target cells where it exerts its toxicity. Also acts directly as an actin-directed toxin that catalyzes the covalent cross-linking of host cytoplasmic monomeric actin. Mediates the cross-link between 'Lys-50' of one monomer and 'Glu-270' of another actin monomer, resulting in formation of highly toxic actin oligomers that cause cell rounding. The toxin can be highly efficient at very low concentrations by acting on formin homology family proteins: toxic actin oligomers bind with high affinity to formins and adversely affect both nucleation and elongation abilities of formins, causing their potent inhibition in both profilin-dependent and independent manners. Acts as an acid--amino-acid ligase that transfers the gamma-phosphoryl group of ATP to the 'Glu-270' actin residue, resulting in the formation of an activated acyl phosphate intermediate. This intermediate is further hydrolyzed and the energy of hydrolysis is utilized for the formation of the amide bond between actin subunits. The chain is Actin cross-linking toxin VgrG1 from Vibrio cholerae serotype O1 (strain ATCC 39315 / El Tor Inaba N16961).